Consider the following 320-residue polypeptide: MNFFTHKKNNFGSFVTIFSFLVALGVTNLTPAAEAYPIFAQQNYENPREANGRIVCANCHLAQKPVELEVPQAVLPDTVFEAVVKIPYDQQVQQVLGNGKKGDLNVGMVLILPDGFELAPADRVPEEMKKKVGKLFYQPYSPDKKNILVVGPVPGKKYSEMVIPILSPDPATNKNVSFLKYPIYFGGNRGRGQVYPDGSKSNNTVYNSSVTGKISNIAPFDKKGGVEITIETANGDSIVEKIPAGPQVIVTQGQTVQPDQPLTNNPNVGGFGQKDVEIVLQNPARIQGLLVFFATVLFAQVLLVLKKKQFEKVQLAEMNF.

Positions 1-35 (MNFFTHKKNNFGSFVTIFSFLVALGVTNLTPAAEA) are cleaved as a signal peptide. The heme site is built by Tyr36, Cys56, Cys59, and His60. Residues 286–306 (IQGLLVFFATVLFAQVLLVLK) form a helical membrane-spanning segment.

The protein belongs to the cytochrome f family. In terms of assembly, the 4 large subunits of the cytochrome b6-f complex are cytochrome b6, subunit IV (17 kDa polypeptide, petD), cytochrome f and the Rieske protein, while the 4 small subunits are PetG, PetL, PetM and PetN. The complex functions as a dimer. Requires heme as cofactor.

It localises to the plastid. The protein resides in the chloroplast thylakoid membrane. In terms of biological role, component of the cytochrome b6-f complex, which mediates electron transfer between photosystem II (PSII) and photosystem I (PSI), cyclic electron flow around PSI, and state transitions. In Tetradesmus obliquus (Green alga), this protein is Cytochrome f.